The following is a 115-amino-acid chain: MKFVLLFGVFLVTLFSYSSAEMLDDFDQADEDELLSLIEKEEARAKECTPRFYDCSHDRHSCCRSELFKDVCTCFYPEGGDNEVCTCQRPKHLKYMEKAADKAKKFGGKIKKWFG.

The N-terminal stretch at Met1–Ala20 is a signal peptide. The propeptide occupies Glu21–Arg44. 4 cysteine pairs are disulfide-bonded: Cys48-Cys63, Cys55-Cys72, Cys62-Cys87, and Cys74-Cys85.

Belongs to the neurotoxin 19 (CSTX) family. 01 subfamily. As to expression, expressed by the venom gland.

The protein localises to the secreted. This chain is U3-lycotoxin-Ls1g, found in Lycosa singoriensis (Wolf spider).